The sequence spans 100 residues: Aspartyl/glutamyl-tRNA(Asn/Gln) amidotransferase subunit C (100 aa).

This sequence belongs to the GatC family. As to quaternary structure, heterotrimer of A, B and C subunits.

The enzyme catalyses L-glutamyl-tRNA(Gln) + L-glutamine + ATP + H2O = L-glutaminyl-tRNA(Gln) + L-glutamate + ADP + phosphate + H(+). It carries out the reaction L-aspartyl-tRNA(Asn) + L-glutamine + ATP + H2O = L-asparaginyl-tRNA(Asn) + L-glutamate + ADP + phosphate + 2 H(+). Functionally, allows the formation of correctly charged Asn-tRNA(Asn) or Gln-tRNA(Gln) through the transamidation of misacylated Asp-tRNA(Asn) or Glu-tRNA(Gln) in organisms which lack either or both of asparaginyl-tRNA or glutaminyl-tRNA synthetases. The reaction takes place in the presence of glutamine and ATP through an activated phospho-Asp-tRNA(Asn) or phospho-Glu-tRNA(Gln). This Staphylococcus haemolyticus (strain JCSC1435) protein is Aspartyl/glutamyl-tRNA(Asn/Gln) amidotransferase subunit C.